The primary structure comprises 160 residues: Nucleotide-binding protein Patl_4311 (160 aa).

The protein belongs to the YajQ family.

Its function is as follows. Nucleotide-binding protein. The sequence is that of Nucleotide-binding protein Patl_4311 from Pseudoalteromonas atlantica (strain T6c / ATCC BAA-1087).